The chain runs to 938 residues: Isoleucine--tRNA ligase (938 aa).

The 'HIGH' region signature appears at 58–68 (PYANGSIHIGH). An N6-acetyllysine modification is found at Lys-183. Glu-561 serves as a coordination point for L-isoleucyl-5'-AMP. The 'KMSKS' region motif lies at 602–606 (KMSKS). Lys-605 contacts ATP. Zn(2+)-binding residues include Cys-901, Cys-904, Cys-921, and Cys-924.

It belongs to the class-I aminoacyl-tRNA synthetase family. IleS type 1 subfamily. Monomer. Zn(2+) serves as cofactor.

The protein localises to the cytoplasm. The catalysed reaction is tRNA(Ile) + L-isoleucine + ATP = L-isoleucyl-tRNA(Ile) + AMP + diphosphate. In terms of biological role, catalyzes the attachment of isoleucine to tRNA(Ile). As IleRS can inadvertently accommodate and process structurally similar amino acids such as valine, to avoid such errors it has two additional distinct tRNA(Ile)-dependent editing activities. One activity is designated as 'pretransfer' editing and involves the hydrolysis of activated Val-AMP. The other activity is designated 'posttransfer' editing and involves deacylation of mischarged Val-tRNA(Ile). The sequence is that of Isoleucine--tRNA ligase from Escherichia coli O6:H1 (strain CFT073 / ATCC 700928 / UPEC).